Consider the following 443-residue polypeptide: Xaa-Pro dipeptidase (443 aa).

Mn(2+)-binding residues include D246, D257, H339, E384, and E423.

This sequence belongs to the peptidase M24B family. Bacterial-type prolidase subfamily. It depends on Mn(2+) as a cofactor.

It carries out the reaction Xaa-L-Pro dipeptide + H2O = an L-alpha-amino acid + L-proline. Splits dipeptides with a prolyl residue in the C-terminal position. This chain is Xaa-Pro dipeptidase, found in Shigella flexneri.